The following is a 171-amino-acid chain: Dual specificity protein phosphatase OPG106 (171 aa).

The protein belongs to the protein-tyrosine phosphatase family. Non-receptor class dual specificity subfamily. In terms of assembly, homodimer.

The protein localises to the virion. Its subcellular location is the host cytoplasm. The enzyme catalyses O-phospho-L-tyrosyl-[protein] + H2O = L-tyrosyl-[protein] + phosphate. It carries out the reaction O-phospho-L-seryl-[protein] + H2O = L-seryl-[protein] + phosphate. In terms of biological role, serine/tyrosine phosphatase which down-regulates cellular antiviral response by dephosphorylating activated host STAT1 and blocking interferon (IFN)-stimulated innate immune responses. Dephosphorylates the OPG144 protein. The chain is Dual specificity protein phosphatase OPG106 (OPG106) from Monkeypox virus.